The sequence spans 414 residues: Transcriptional repressor protein YY1 (414 aa).

Residues 1–170 (MASGDTLYIA…GGGSSSSGGG (170 aa)) are interaction with the SMAD1/SMAD4 complex. Residues 33–81 (VETIETTVVGEEEEEDDDDEDGGGGDHGGGGGHGHAGHHHHHHHHHHHP) form a disordered region. A compositionally biased stretch (acidic residues) spans 42 to 55 (GEEEEEDDDDEDGG). Gly residues predominate over residues 57–66 (GDHGGGGGHG). Over residues 67–81 (HAGHHHHHHHHHHHP) the composition is skewed to basic residues. Positions 116–260 (DDSDGLRAED…YSEYMTGKKL (145 aa)) are gly-rich region involved in interaction with HCFC1. Position 118 is a phosphoserine; by CK2 (Ser118). The disordered stretch occupies residues 157 to 203 (GKSGGGGSSSSGGGRVKKGGGKKSGKKSYLSGGAGAAGGGGADPGNK). The segment covering 158 to 170 (KSGGGGSSSSGGG) has biased composition (gly residues). Residues 171–182 (RVKKGGGKKSGK) show a composition bias toward basic residues. Residues Lys182 and Lys183 each participate in a glycyl lysine isopeptide (Lys-Gly) (interchain with G-Cter in SUMO2) cross-link. Ser187 bears the Phosphoserine mark. The segment covering 188–199 (GGAGAAGGGGAD) has biased composition (gly residues). Glycyl lysine isopeptide (Lys-Gly) (interchain with G-Cter in SUMO2) cross-links involve residues Lys208 and Lys230. Ser247 is modified (phosphoserine). Positions 257 to 341 (GKKLPPGGIP…KAFVESSKLK (85 aa)) are involved in nuclear matrix association. Glycyl lysine isopeptide (Lys-Gly) (interchain with G-Cter in SUMO2) cross-links involve residues Lys286 and Lys288. A binding to DNA region spans residues 295–414 (TIACPHKGCT…LTHAKAKNNQ (120 aa)). C2H2-type zinc fingers lie at residues 296–320 (IACP…LHTH), 325–347 (HVCA…QLVH), and 353–377 (FQCT…VRIH). Cys298, Cys303, His316, His320, Cys327, Cys330, His343, His347, Cys355, Cys360, His373, and His377 together coordinate Zn(2+). An involved in repression of activated transcription region spans residues 333–371 (AFVESSKLKRHQLVHTGEKPFQCTFEGCGKRFSLDFNLR). Residues 371 to 397 (RTHVRIHTGDRPYVCPFDGCNKKFAQS) form an involved in masking transactivation domain region. Thr378 is modified (phosphothreonine). The C2H2-type 4 zinc-finger motif lies at 383 to 407 (YVCPFDGCNKKFAQSTNLKSHILTH). Residues Cys385, Cys390, His403, and His407 each contribute to the Zn(2+) site. Glycyl lysine isopeptide (Lys-Gly) (interchain with G-Cter in SUMO2) cross-links involve residues Lys409 and Lys411.

This sequence belongs to the YY transcription factor family. Interacts with YAF2 through the region encompassing the first and second zinc fingers. Component of the chromatin remodeling INO80 complex; specifically part of a complex module associated with the DBINO domain of INO80. Interacts with EED and EZH2; the interactions are indicative for an association with the PRC2/EED-EZH2 complex. Interacts with SFMBT2. Found in a complex with SMAD1 and SMAD4. Found in a complex with YY1, SIN3A and HDAC1. Accessory component of the polycomb repressive deubiquitinase (PR-DUB) complex, at least composed of BAP1, one of ASXL1, ASXL2 or (probably) ASXL3 and one of MBD5 or MBD6; the PR-DUB core associates with a number of accessory proteins, including FOXK1, FOXK2, KDM1B, HCFC1, YY1 and OGT. Interacts (via Gly-rich region) with HCFC1; the interaction is direct. Interacts (via C-terminal zinc-finger domains) with BAP1 (via ULD domain); the interaction is direct and requires HCFC1. Phosphorylation at Ser-118 by CK2 prevents proteolytic cleavage by caspase-7 (CASP7) during apoptosis. In terms of processing, proteolytically cleaved by caspase-7 (CASP7) in response to apoptosis. Phosphorylation at Ser-118 protects against proteolytic cleavage. Post-translationally, transiently poly-ADP-ribosylated by PARP1 upon DNA damage, with the effect of decreasing affinity of YY1 to its cognate DNA binding sites. Ubiquitinated.

It is found in the nucleus matrix. In terms of biological role, multifunctional transcription factor that exhibits positive and negative control on a large number of cellular and viral genes by binding to sites overlapping the transcription start site. Binds to the consensus sequence 5'-CCGCCATNTT-3'; some genes have been shown to contain a longer binding motif allowing enhanced binding; the initial CG dinucleotide can be methylated greatly reducing the binding affinity. The effect on transcription regulation is depending upon the context in which it binds and diverse mechanisms of action include direct activation or repression, indirect activation or repression via cofactor recruitment, or activation or repression by disruption of binding sites or conformational DNA changes. Its activity is regulated by transcription factors and cytoplasmic proteins that have been shown to abrogate or completely inhibit YY1-mediated activation or repression. For example, it acts as a repressor in absence of adenovirus E1A protein but as an activator in its presence. Acts synergistically with the SMAD1 and SMAD4 in bone morphogenetic protein (BMP)-mediated cardiac-specific gene expression. Binds to SMAD binding elements (SBEs) (5'-GTCT/AGAC-3') within BMP response element (BMPRE) of cardiac activating regions. May play an important role in development and differentiation. Proposed to recruit the PRC2/EED-EZH2 complex to target genes that are transcriptional repressed. Involved in DNA repair. In vitro, binds to DNA recombination intermediate structures (Holliday junctions). Plays a role in regulating enhancer activation. Recruits the PR-DUB complex to specific gene-regulatory regions. Its function is as follows. Proposed core component of the chromatin remodeling INO80 complex which is involved in transcriptional regulation, DNA replication and probably DNA repair; proposed to target the INO80 complex to YY1-responsive elements. This is Transcriptional repressor protein YY1 (YY1) from Homo sapiens (Human).